The primary structure comprises 910 residues: Dimethylsulfide dehydrogenase subunit alpha (910 aa).

Positions 1–28 (MLRTTRRTLMQGASLVGAGLFAAGRGWA) form a signal peptide, tat-type signal. The region spanning 59–123 (DYVGKAAHCI…IHSTSMYEAD (65 aa)) is the 4Fe-4S Mo/W bis-MGD-type domain. The [4Fe-4S] cluster site is built by His66, Cys70, Cys74, and Cys109.

The protein belongs to the prokaryotic molybdopterin-containing oxidoreductase family. In terms of assembly, heterotrimer of alpha, beta and gamma subunits. Requires [4Fe-4S] cluster as cofactor. Mo-bis(molybdopterin guanine dinucleotide) serves as cofactor. In terms of processing, predicted to be exported by the Tat system. The position of the signal peptide cleavage has been experimentally proven.

The protein localises to the periplasm. The enzyme catalyses 2 Fe(III)-[cytochrome c2] + dimethyl sulfide + H2O = 2 Fe(II)-[cytochrome c2] + dimethyl sulfoxide + 2 H(+). In terms of biological role, allows photoautotrophic growth on dimethyl sulfide (DMS) as the sole electron donor. The protein is Dimethylsulfide dehydrogenase subunit alpha (ddhA) of Rhodovulum sulfidophilum (Rhodobacter sulfidophilus).